A 982-amino-acid polypeptide reads, in one-letter code: Probable DNA-directed RNA polymerase (982 aa).

Belongs to the RNA polymerase beta chain family.

The catalysed reaction is RNA(n) + a ribonucleoside 5'-triphosphate = RNA(n+1) + diphosphate. Its function is as follows. The presence of the two linear plasmids, termed pGKL1 and pGKL2, in strains of Kluyveromyces lactis confers the killer phenotype to the host cell, by promoting the secretion of a toxin able to inhibit the growth of sensitive strains. The protein is Probable DNA-directed RNA polymerase of Kluyveromyces lactis (strain ATCC 8585 / CBS 2359 / DSM 70799 / NBRC 1267 / NRRL Y-1140 / WM37) (Yeast).